Consider the following 559-residue polypeptide: Formate--tetrahydrofolate ligase (559 aa).

66–73 (TPPGEGKT) is a binding site for ATP.

It belongs to the formate--tetrahydrofolate ligase family.

It catalyses the reaction (6S)-5,6,7,8-tetrahydrofolate + formate + ATP = (6R)-10-formyltetrahydrofolate + ADP + phosphate. It functions in the pathway one-carbon metabolism; tetrahydrofolate interconversion. This Nocardioides sp. (strain ATCC BAA-499 / JS614) protein is Formate--tetrahydrofolate ligase.